The following is a 432-amino-acid chain: Adenylosuccinate synthetase (432 aa).

Residues 13-19 and 41-43 each bind GTP; these read GDEGKGK and GHT. The Proton acceptor role is filled by Asp-14. 2 residues coordinate Mg(2+): Asp-14 and Gly-41. IMP contacts are provided by residues 14-17, 39-42, Thr-130, Arg-144, Gln-225, Thr-240, and Arg-304; these read DEGK and NAGH. His-42 functions as the Proton donor in the catalytic mechanism. 300–306 contributes to the substrate binding site; it reads ATTGRRR. GTP contacts are provided by residues Arg-306, 332-334, and 415-417; these read KLD and STG.

It belongs to the adenylosuccinate synthetase family. Homodimer. Requires Mg(2+) as cofactor.

Its subcellular location is the cytoplasm. It catalyses the reaction IMP + L-aspartate + GTP = N(6)-(1,2-dicarboxyethyl)-AMP + GDP + phosphate + 2 H(+). The protein operates within purine metabolism; AMP biosynthesis via de novo pathway; AMP from IMP: step 1/2. Functionally, plays an important role in the de novo pathway of purine nucleotide biosynthesis. Catalyzes the first committed step in the biosynthesis of AMP from IMP. This Escherichia coli (strain K12) protein is Adenylosuccinate synthetase.